The chain runs to 160 residues: Eukaryotic translation initiation factor 5A (160 aa).

The segment covering 1 to 10 (MSDDDHHFES) has biased composition (basic and acidic residues). The tract at residues 1-23 (MSDDDHHFESSADAGASKTYPQQ) is disordered. K52 is modified (hypusine).

The protein belongs to the eIF-5A family. Post-translationally, lys-52 undergoes hypusination, a unique post-translational modification that consists in the addition of a butylamino group from spermidine to lysine side chain, leading to the formation of the unusual amino acid hypusine. eIF-5As are the only known proteins to undergo this modification, which is essential for their function.

Its function is as follows. Translation factor that promotes translation elongation and termination, particularly upon ribosome stalling at specific amino acid sequence contexts. Binds between the exit (E) and peptidyl (P) site of the ribosome and promotes rescue of stalled ribosome: specifically required for efficient translation of polyproline-containing peptides as well as other motifs that stall the ribosome. Acts as a ribosome quality control (RQC) cofactor by joining the RQC complex to facilitate peptidyl transfer during CAT tailing step. The polypeptide is Eukaryotic translation initiation factor 5A (Dianthus caryophyllus (Carnation)).